Here is a 134-residue protein sequence, read N- to C-terminus: MTISLKVLAPNKNVYQGEAEEVILPSTTGQLGILPGHISLVTAIDIGVLRVRINSQWKSIALMGGFAEIESDEVIVLVNNAEIGSEINVQNAEQDLKEAKLAISKFSENEKNPEKIKALKEVSKAEARIQAAKN.

This sequence belongs to the ATPase epsilon chain family. As to quaternary structure, F-type ATPases have 2 components, CF(1) - the catalytic core - and CF(0) - the membrane proton channel. CF(1) has five subunits: alpha(3), beta(3), gamma(1), delta(1), epsilon(1). CF(0) has three main subunits: a, b and c.

The protein resides in the cellular thylakoid membrane. In terms of biological role, produces ATP from ADP in the presence of a proton gradient across the membrane. In Prochlorococcus marinus (strain MIT 9301), this protein is ATP synthase epsilon chain.